Reading from the N-terminus, the 144-residue chain is Large ribosomal subunit protein uL15 (144 aa).

Positions 20-49 are disordered; sequence GRGIGSGLGKTGGRGHKGQKSRSGGFHKVG. Positions 21–31 are enriched in gly residues; that stretch reads RGIGSGLGKTG.

The protein belongs to the universal ribosomal protein uL15 family. In terms of assembly, part of the 50S ribosomal subunit.

In terms of biological role, binds to the 23S rRNA. The chain is Large ribosomal subunit protein uL15 from Neisseria gonorrhoeae (strain ATCC 700825 / FA 1090).